A 78-amino-acid polypeptide reads, in one-letter code: MKRNIFCHFMKNFHERLDFPPYPGSIGKKIYKNISKKAWEIWKNHQTILINEKQLNMLNKKDRKTIEIEMINFLFKNK.

Belongs to the Fe(2+)-trafficking protein family. In terms of assembly, monomer.

Functionally, could be a mediator in iron transactions between iron acquisition and iron-requiring processes, such as synthesis and/or repair of Fe-S clusters in biosynthetic enzymes. The sequence is that of Probable Fe(2+)-trafficking protein from Wigglesworthia glossinidia brevipalpis.